Consider the following 880-residue polypeptide: Kinesin heavy chain (880 aa).

The 324-residue stretch at 4–327 folds into the Kinesin motor domain; sequence SIKVVCRFRP…LRFGMRAKAI (324 aa). ATP is bound by residues 85–92 and 235–242; these read GQTGAGKS and GSEKVGKT. Residues 388–426 form a disordered region; that stretch reads VSGAKAAAAQTPRPSTPSRLATESRAETPVAERSATPGI. A compositionally biased stretch (polar residues) spans 399-408; that stretch reads PRPSTPSRLA. A coiled-coil region spans residues 428-849; that stretch reads IDKDEREEFL…QEKLTTASHR (422 aa).

It belongs to the TRAFAC class myosin-kinesin ATPase superfamily. Kinesin family. Kinesin subfamily.

Its subcellular location is the cytoplasm. It localises to the cytoskeleton. Its function is as follows. Kinesin is a microtubule-associated force-producing protein that may play a role in organelle transport. Its motor activity is directed toward the microtubule's plus end. This chain is Kinesin heavy chain (klp1), found in Botryotinia fuckeliana (Noble rot fungus).